We begin with the raw amino-acid sequence, 66 residues long: Large ribosomal subunit protein uL29 (66 aa).

The protein belongs to the universal ribosomal protein uL29 family.

In Francisella tularensis subsp. holarctica (strain LVS), this protein is Large ribosomal subunit protein uL29.